Here is a 574-residue protein sequence, read N- to C-terminus: (R)-mandelonitrile lyase 4 (574 aa).

The signal sequence occupies residues 1-27 (MEKSTMSAVVLVLNLLVLHLQYSEVHS). N-linked (GlcNAc...) asparagine glycosylation is present at Asn30. 64-65 (TS) is an FAD binding site. A glycan (N-linked (GlcNAc...) asparagine) is linked at Asn76. Residues 83–84 (ER), Thr134, and 138–141 (NAGV) each bind FAD. N-linked (GlcNAc...) asparagine glycosylation is found at Asn146, Asn151, and Asn179. Position 245 (Val245) interacts with FAD. Asn268 and Asn310 each carry an N-linked (GlcNAc...) asparagine glycan. A substrate-binding site is contributed by Cys357. Asn381, Asn407, and Asn468 each carry an N-linked (GlcNAc...) asparagine glycan. A disulfide bridge connects residues Cys428 and Cys479. Position 486 (Tyr486) interacts with substrate. Residues 487 to 488 (WH) and Gly516 each bind FAD. The active-site Proton donor is His488. His526 acts as the Proton acceptor in catalysis. 527 to 528 (PQ) provides a ligand contact to FAD.

It belongs to the GMC oxidoreductase family. In terms of assembly, monomer. Requires FAD as cofactor.

Its subcellular location is the vacuole. It localises to the aleurone grain. It catalyses the reaction (R)-mandelonitrile = benzaldehyde + hydrogen cyanide. Functionally, involved in cyanogenesis, the release of HCN from injured tissues. Catalyzes the stereospecific addition of HCN to a variety of aldehydes in vitro. It is a major seed constituent, and could have the additional role of a storage form for reduced nitrogen. This chain is (R)-mandelonitrile lyase 4 (MDL4), found in Prunus serotina (Black cherry).